The primary structure comprises 198 residues: T-cell surface glycoprotein CD3 epsilon chain (198 aa).

The signal sequence occupies residues M1–G21. Over Q22–D117 the chain is Extracellular. Residues Q37–A107 enclose the Ig-like domain. C49 and C89 are oxidised to a cystine. Residues V118–L138 form a helical membrane-spanning segment. Residues V139–I198 lie on the Cytoplasmic side of the membrane. The disordered stretch occupies residues P152–I198. Positions Q166–R183 are NUMB-binding region. Residues E169 to R196 form the ITAM domain. The tract at residues R170–P177 is proline-rich sequence. Phosphotyrosine occurs at positions 179 and 190. Over residues D188–I198 the composition is skewed to polar residues.

The TCR-CD3 complex is composed of a CD3D/CD3E and a CD3G/CD3E heterodimers that preferentially associate with TCRalpha and TCRbeta, respectively, to form TCRalpha/CD3E/CD3G and TCRbeta/CD3G/CD3E trimers. In turn, the hexamer interacts with CD3Z homodimer to form the TCR-CD3 complex. Alternatively, TCRalpha and TCRbeta can be replaced by TCRgamma and TCRdelta. Interacts with CD6. Interacts (via Proline-rich sequence) with NCK1; the interaction is ligand dependent but independent of tyrosine kinase activation. Phosphorylated on Tyr residues after T-cell receptor triggering by LCK in association with CD4/CD8.

The protein resides in the cell membrane. Part of the TCR-CD3 complex present on T-lymphocyte cell surface that plays an essential role in adaptive immune response. When antigen presenting cells (APCs) activate T-cell receptor (TCR), TCR-mediated signals are transmitted across the cell membrane by the CD3 chains CD3D, CD3E, CD3G and CD3Z. All CD3 chains contain immunoreceptor tyrosine-based activation motifs (ITAMs) in their cytoplasmic domain. Upon TCR engagement, these motifs become phosphorylated by Src family protein tyrosine kinases LCK and FYN, resulting in the activation of downstream signaling pathways. In addition of this role of signal transduction in T-cell activation, CD3E plays an essential role in correct T-cell development. Also participates in internalization and cell surface down-regulation of TCR-CD3 complexes via endocytosis sequences present in CD3E cytosolic region. In addition to its role as a TCR coreceptor, it serves as a receptor for ITPRIPL1. Ligand recognition inhibits T-cell activation by promoting interaction with NCK1, which prevents CD3E-ZAP70 interaction and blocks the ERK-NFkB signaling cascade and calcium influx. The sequence is that of T-cell surface glycoprotein CD3 epsilon chain (CD3E) from Macaca fascicularis (Crab-eating macaque).